Reading from the N-terminus, the 489-residue chain is UDP-N-acetylmuramate--L-alanine ligase (489 aa).

ATP is bound at residue 128–134 (GTHGKTT).

It belongs to the MurCDEF family.

The protein resides in the cytoplasm. The enzyme catalyses UDP-N-acetyl-alpha-D-muramate + L-alanine + ATP = UDP-N-acetyl-alpha-D-muramoyl-L-alanine + ADP + phosphate + H(+). The protein operates within cell wall biogenesis; peptidoglycan biosynthesis. Cell wall formation. The sequence is that of UDP-N-acetylmuramate--L-alanine ligase from Shewanella halifaxensis (strain HAW-EB4).